Reading from the N-terminus, the 213-residue chain is Adenylate kinase (213 aa).

Position 14–19 (14–19 (GSGKGT)) interacts with ATP. The tract at residues 34–63 (STGDLLRAIIREGTPNGLKAKAYLDKGAFV) is NMP. Residues Thr-35, Arg-40, 61–63 (AFV), 89–92 (GFPR), and Gln-96 each bind AMP. The interval 129-162 (SRFLCPSCSRIYNTSQGHTECPDCHVPLIRRSDD) is LID. Arg-130 provides a ligand contact to ATP. Zn(2+)-binding residues include Cys-133 and Cys-136. An ATP-binding site is contributed by 139 to 140 (IY). 2 residues coordinate Zn(2+): Cys-149 and Cys-152. AMP-binding residues include Arg-159 and Arg-170. Residue Asn-198 participates in ATP binding.

Belongs to the adenylate kinase family. Monomer.

The protein localises to the cytoplasm. The catalysed reaction is AMP + ATP = 2 ADP. It participates in purine metabolism; AMP biosynthesis via salvage pathway; AMP from ADP: step 1/1. Functionally, catalyzes the reversible transfer of the terminal phosphate group between ATP and AMP. Plays an important role in cellular energy homeostasis and in adenine nucleotide metabolism. The protein is Adenylate kinase of Chlamydia pneumoniae (Chlamydophila pneumoniae).